Consider the following 440-residue polypeptide: Proline--tRNA ligase (440 aa).

This sequence belongs to the class-II aminoacyl-tRNA synthetase family. ProS type 2 subfamily. In terms of assembly, homodimer.

The protein resides in the cytoplasm. The catalysed reaction is tRNA(Pro) + L-proline + ATP = L-prolyl-tRNA(Pro) + AMP + diphosphate. Its function is as follows. Catalyzes the attachment of proline to tRNA(Pro) in a two-step reaction: proline is first activated by ATP to form Pro-AMP and then transferred to the acceptor end of tRNA(Pro). This chain is Proline--tRNA ligase, found in Methylocella silvestris (strain DSM 15510 / CIP 108128 / LMG 27833 / NCIMB 13906 / BL2).